The primary structure comprises 1055 residues: MKSASSEQSVERIENGHKKKRNRPQKQNRRSKQSSVPIEDAHVEESLDGRDSSRSKAKDSTSSSKQQRPNTDELEAMRASNVAFNSMPPMRAESGYPRRSASPLLSSPEVSKQLLSKSCPDPRACEQSPGMNGELFQQIEGSSQRKIFSSHWSLDAVTEALEKGEAFKALFRVNAHNRNEAYCKIDGVPTDILINGNVCQSRAVEGDTVVIKLDPLSLWPKMKGFVTESAAKPEGTNSPPEKDDKKARQKNGIDVVEGFEDGFSKNKSSVIGKGAKNGVTPSSPPSLDSCLGSFCEQKGNCSAVDKLCGILSSFPHKRPTGQVVAVVEKSLVRDSIVGLLDVKGWIHYKESDPKRCKSPLSLSDDEYVQLMPADPRFPKLIVPFHVLPGSIRARLENLDPNLEAELVAAQIVDWGEGSPFPVAQITHLFGRGSELEPQINAILYQNSVCDSDFSPGSLTSLPRVPWEVPEEEVQRRKDLRDLCVLTIDPSTATDLDDALSVQSLPGGFFRVGVHIADVSYFVLPETALDTEARFRSTSVYLMQRKISMLPPLLSENVGSLSPGADRLAFSILWDLNREGDVIDRWIGRTIIRSCCKLSYDHAQDIIDGKSDVAENGWPALHGSFKWCDVTRSVKQLSEISTTLRQKRFRNGALQLENSKPVFLFDEHGVPYDFVTCSRKGSNFLVEEFMLLANMTAAEVISQAYPASSLLRRHPEPNTRKLKEFEGFCSKHGMDLDISSSGQLQDSLEKITGNLKDDSVFVDILNNYAIKPMQLASYFCTGNLKDSVAEWGHYALAVPLYTHFTSPLRRYPDIVVHRALAAALEAEELYSKQKQTAIDEGRSCFTGIHFNKDAAESIEGKEALSVAALKHGVPSTEILSDVAAYCNERKLAARKVRDACDKLYTWFVLKQKEIFPCEARVMNLGSRFMTVYISKLGIERRIYYDQIEGLCADWLEATSTLIVDKLYSKRGGRGFFKPMKEAVYLVSPCEVCVAKCSALSVHDTESPEAVSIDEVAPAVFPLTIQLFSTIPVVLHAVGGDDGPLDIGARLYMSSYY.

Disordered regions lie at residues 1-109 (MKSA…SSPE) and 229-249 (SAAK…KARQ). Residues 17 to 32 (HKKKRNRPQKQNRRSK) show a composition bias toward basic residues. Residues 39-59 (EDAHVEESLDGRDSSRSKAKD) are compositionally biased toward basic and acidic residues. Over residues 97–108 (PRRSASPLLSSP) the composition is skewed to low complexity. D488 and D497 together coordinate Mg(2+).

It belongs to the RNR ribonuclease family. DIS3L2 subfamily. The cofactor is Mg(2+). Requires Mn(2+) as cofactor. Widely expressed.

It localises to the cytoplasm. The protein localises to the P-body. Functionally, 3'-5'-exoribonuclease that specifically recognizes RNAs polyuridylated at their 3' end and mediates their degradation. Component of an exosome-independent RNA degradation pathway that mediates degradation of cytoplasmic mRNAs that have been deadenylated and subsequently uridylated at their 3'. The protein is DIS3-like exonuclease 2 (SOV) of Arabidopsis thaliana (Mouse-ear cress).